The chain runs to 450 residues: TNF receptor-associated factor family protein DDB_G0273433/DDB_G0273509 (450 aa).

An RING-type; degenerate zinc finger spans residues 26–73 (CQICFNSVIDFKKETLSFDVLQCRNGHISCHECWNRQLSIKQECPSCK). 2 TRAF-type zinc fingers span residues 129–185 (HHLK…KKLN) and 186–243 (KHIE…SQLS). Residues 257-297 (QNVMDLHKLQLDECNQDYRKLEKQNRDLEKRLFYLESTVNS) adopt a coiled-coil conformation. One can recognise an MATH domain in the interval 319–439 (VYKGKWVINN…NNSLTISISI (121 aa)).

This sequence belongs to the TNF receptor-associated factor family. A subfamily.

The protein localises to the cytoplasm. Functionally, probable adapter protein and signal transducer that links members of the tumor necrosis factor receptor family to different signaling pathways by association with the receptor cytoplasmic domain and kinases. The polypeptide is TNF receptor-associated factor family protein DDB_G0273433/DDB_G0273509 (Dictyostelium discoideum (Social amoeba)).